The chain runs to 201 residues: Two-component response regulator ORR10 (201 aa).

The Response regulatory domain occupies 10-142 (HVLAVDDSLP…DMSKLKPHIL (133 aa)). Position 75 is a 4-aspartylphosphate (Asp-75). The tract at residues 149–201 (HYQQEQHLQSNSESNNSSNPTSENSSSSTSTNSHKRKAVDEEILPHTIRPRHS) is disordered. Positions 158–180 (SNSESNNSSNPTSENSSSSTSTN) are enriched in low complexity.

Belongs to the ARR family. Type-A subfamily. Post-translationally, two-component system major event consists of a His-to-Asp phosphorelay between a sensor histidine kinase (HK) and a response regulator (RR). In plants, the His-to-Asp phosphorelay involves an additional intermediate named Histidine-containing phosphotransfer protein (HPt). This multistep phosphorelay consists of a His-Asp-His-Asp sequential transfer of a phosphate group between first a His and an Asp of the HK protein, followed by the transfer to a conserved His of the HPt protein and finally the transfer to an Asp in the receiver domain of the RR protein. In terms of tissue distribution, expressed in mature leaves, and at low levels in roots, shoots and flowers.

Functions as a response regulator involved in His-to-Asp phosphorelay signal transduction system. Phosphorylation of the Asp residue in the receiver domain activates the ability of the protein to promote the transcription of target genes. Type-A response regulators seem to act as negative regulators of the cytokinin signaling. The chain is Two-component response regulator ORR10 from Oryza sativa subsp. indica (Rice).